The sequence spans 187 residues: Probable chemoreceptor glutamine deamidase CheD 1 (187 aa).

It belongs to the CheD family.

The catalysed reaction is L-glutaminyl-[protein] + H2O = L-glutamyl-[protein] + NH4(+). Functionally, probably deamidates glutamine residues to glutamate on methyl-accepting chemotaxis receptors (MCPs), playing an important role in chemotaxis. The polypeptide is Probable chemoreceptor glutamine deamidase CheD 1 (Ruegeria sp. (strain TM1040) (Silicibacter sp.)).